Consider the following 437-residue polypeptide: Phosphatidylserine decarboxylase proenzyme 1, mitochondrial (437 aa).

The N-terminal 18 residues, 1–18 (MLKFHRNVKPQFGAFARY), are a transit peptide targeting the mitochondrion. At 19–38 (SSLGKHNSRKRVGIIRLAYG) the chain is on the mitochondrial matrix side. The chain crosses the membrane as a helical span at residues 39 to 57 (LTGIGLVGLAGFAWAQDRH). Topologically, residues 58 to 437 (EKTYQKKGVQ…PLGRVVPSSH (380 aa)) are mitochondrial intermembrane. Catalysis depends on charge relay system; for autoendoproteolytic cleavage activity residues Asp157, His287, and Ser401. Ser401 functions as the Schiff-base intermediate with substrate; via pyruvic acid; for decarboxylase activity in the catalytic mechanism. At Ser401 the chain carries Pyruvic acid (Ser); by autocatalysis.

It belongs to the phosphatidylserine decarboxylase family. PSD-B subfamily. Eukaryotic type I sub-subfamily. Heterodimer of a large membrane-associated beta subunit and a small pyruvoyl-containing alpha subunit. The cofactor is pyruvate. In terms of processing, is synthesized initially as an inactive proenzyme. Formation of the active enzyme involves a self-maturation process in which the active site pyruvoyl group is generated from an internal serine residue via an autocatalytic post-translational modification. Two non-identical subunits are generated from the proenzyme in this reaction, and the pyruvate is formed at the N-terminus of the alpha chain, which is derived from the carboxyl end of the proenzyme. The autoendoproteolytic cleavage occurs by a canonical serine protease mechanism, in which the side chain hydroxyl group of the serine supplies its oxygen atom to form the C-terminus of the beta chain, while the remainder of the serine residue undergoes an oxidative deamination to produce ammonia and the pyruvoyl prosthetic group on the alpha chain. During this reaction, the Ser that is part of the protease active site of the proenzyme becomes the pyruvoyl prosthetic group, which constitutes an essential element of the active site of the mature decarboxylase.

It is found in the mitochondrion. The protein resides in the mitochondrion inner membrane. It catalyses the reaction a 1,2-diacyl-sn-glycero-3-phospho-L-serine + H(+) = a 1,2-diacyl-sn-glycero-3-phosphoethanolamine + CO2. Its pathway is phospholipid metabolism; phosphatidylethanolamine biosynthesis; phosphatidylethanolamine from CDP-diacylglycerol: step 2/2. Catalyzes the formation of phosphatidylethanolamine (PtdEtn) from phosphatidylserine (PtdSer). Plays a central role in phospholipid metabolism and in the interorganelle trafficking of phosphatidylserine. Together with psd2 and psd3, responsible for the majority of phosphatidylethanolamine synthesis. The sequence is that of Phosphatidylserine decarboxylase proenzyme 1, mitochondrial from Schizosaccharomyces pombe (strain 972 / ATCC 24843) (Fission yeast).